A 285-amino-acid chain; its full sequence is Ribonuclease Z (285 aa).

Zn(2+) is bound by residues His61, His63, Asp65, His66, His152, Asp175, and His239. The active-site Proton acceptor is the Asp65.

The protein belongs to the RNase Z family. In terms of assembly, homodimer. The cofactor is Zn(2+).

The enzyme catalyses Endonucleolytic cleavage of RNA, removing extra 3' nucleotides from tRNA precursor, generating 3' termini of tRNAs. A 3'-hydroxy group is left at the tRNA terminus and a 5'-phosphoryl group is left at the trailer molecule.. Zinc phosphodiesterase, which displays some tRNA 3'-processing endonuclease activity. Probably involved in tRNA maturation, by removing a 3'-trailer from precursor tRNA. The protein is Ribonuclease Z of Mycobacterium sp. (strain JLS).